The chain runs to 570 residues: Formate--tetrahydrofolate ligase (570 aa).

65-72 (TPLGEGKT) contributes to the ATP binding site.

This sequence belongs to the formate--tetrahydrofolate ligase family.

It carries out the reaction (6S)-5,6,7,8-tetrahydrofolate + formate + ATP = (6R)-10-formyltetrahydrofolate + ADP + phosphate. The protein operates within one-carbon metabolism; tetrahydrofolate interconversion. This is Formate--tetrahydrofolate ligase from Herpetosiphon aurantiacus (strain ATCC 23779 / DSM 785 / 114-95).